We begin with the raw amino-acid sequence, 272 residues long: F-actin-capping protein subunit beta (272 aa).

The protein belongs to the F-actin-capping protein beta subunit family. As to quaternary structure, component of the F-actin capping complex, composed of a heterodimer of an alpha and a beta subunit.

It is found in the cytoplasm. It localises to the cytoskeleton. F-actin-capping proteins bind in a Ca(2+)-independent manner to the fast growing ends of actin filaments (barbed end) thereby blocking the exchange of subunits at these ends. Unlike other capping proteins (such as gelsolin and severin), these proteins do not sever actin filaments. This Dictyostelium discoideum (Social amoeba) protein is F-actin-capping protein subunit beta (acpA).